A 185-amino-acid chain; its full sequence is Elongation factor P (185 aa).

This sequence belongs to the elongation factor P family.

It is found in the cytoplasm. The protein operates within protein biosynthesis; polypeptide chain elongation. Involved in peptide bond synthesis. Stimulates efficient translation and peptide-bond synthesis on native or reconstituted 70S ribosomes in vitro. Probably functions indirectly by altering the affinity of the ribosome for aminoacyl-tRNA, thus increasing their reactivity as acceptors for peptidyl transferase. The sequence is that of Elongation factor P from Thermosipho africanus (strain TCF52B).